We begin with the raw amino-acid sequence, 470 residues long: 6-phospho-beta-galactosidase (470 aa).

Residues glutamine 19, histidine 116, asparagine 159, glutamate 160, and asparagine 297 each contribute to the D-galactose 6-phosphate site. The active-site Proton donor is glutamate 160. Glutamate 375 acts as the Nucleophile in catalysis. 4 residues coordinate D-galactose 6-phosphate: serine 430, tryptophan 431, lysine 437, and tyrosine 439.

It belongs to the glycosyl hydrolase 1 family.

It catalyses the reaction a 6-phospho-beta-D-galactoside + H2O = D-galactose 6-phosphate + an alcohol. Its pathway is carbohydrate metabolism; lactose degradation; D-galactose 6-phosphate and beta-D-glucose from lactose 6-phosphate: step 1/1. The sequence is that of 6-phospho-beta-galactosidase from Staphylococcus aureus (strain Mu3 / ATCC 700698).